We begin with the raw amino-acid sequence, 153 residues long: UPF0743 protein YCR087C-A (153 aa).

C2HC LYAR-type zinc fingers lie at residues 1-26 (MVTFNCEVCNDTVPKKNTEKHYYRCP) and 27-52 (NAYYTCIDCSKTFEDGVSYKNHTSCI). The Zn(2+) site is built by C6, C9, H21, C25, C32, C35, H48, and C51. Positions 63 to 96 (YKGNKKQKQKQQQKQQQKQHQHQPVATPAKKVEK) are disordered. Basic residues predominate over residues 65 to 83 (GNKKQKQKQQQKQQQKQHQ).

Belongs to the UPF0743 family.

It is found in the nucleus. Its subcellular location is the nucleolus. This Saccharomyces cerevisiae (strain ATCC 204508 / S288c) (Baker's yeast) protein is UPF0743 protein YCR087C-A.